Here is a 108-residue protein sequence, read N- to C-terminus: Parvalbumin beta (108 aa).

Ala-1 is modified (N-acetylalanine). 2 consecutive EF-hand domains span residues 38-73 and 77-108; these read KSNE…FSAG and LTKT…LVKA. Asp-51, Asp-53, Ser-55, Phe-57, Glu-59, Glu-62, Asp-90, Asp-92, Asp-94, Lys-96, and Glu-101 together coordinate Ca(2+).

This sequence belongs to the parvalbumin family.

In muscle, parvalbumin is thought to be involved in relaxation after contraction. It binds two calcium ions. This chain is Parvalbumin beta, found in Latimeria chalumnae (Coelacanth).